Here is a 370-residue protein sequence, read N- to C-terminus: Putative glutamate--cysteine ligase 2 (370 aa).

The protein belongs to the glutamate--cysteine ligase type 2 family. YbdK subfamily.

The enzyme catalyses L-cysteine + L-glutamate + ATP = gamma-L-glutamyl-L-cysteine + ADP + phosphate + H(+). In terms of biological role, ATP-dependent carboxylate-amine ligase which exhibits weak glutamate--cysteine ligase activity. This chain is Putative glutamate--cysteine ligase 2, found in Herminiimonas arsenicoxydans.